The following is a 551-amino-acid chain: Glucose-6-phosphate isomerase 2 (551 aa).

E353 functions as the Proton donor in the catalytic mechanism. Catalysis depends on residues H384 and K512.

It belongs to the GPI family.

It is found in the cytoplasm. It catalyses the reaction alpha-D-glucose 6-phosphate = beta-D-fructose 6-phosphate. It functions in the pathway carbohydrate biosynthesis; gluconeogenesis. The protein operates within carbohydrate degradation; glycolysis; D-glyceraldehyde 3-phosphate and glycerone phosphate from D-glucose: step 2/4. Its function is as follows. Catalyzes the reversible isomerization of glucose-6-phosphate to fructose-6-phosphate. This chain is Glucose-6-phosphate isomerase 2, found in Colwellia psychrerythraea (strain 34H / ATCC BAA-681) (Vibrio psychroerythus).